The following is a 398-amino-acid chain: Acetate kinase (398 aa).

Asn7 lines the Mg(2+) pocket. Lys14 is a binding site for ATP. A substrate-binding site is contributed by Arg96. Asp153 serves as the catalytic Proton donor/acceptor. ATP-binding positions include 210–214 (HLGNG), 284–286 (DLR), and 332–336 (GIGEH). Residue Glu385 participates in Mg(2+) binding.

Belongs to the acetokinase family. In terms of assembly, homodimer. Mg(2+) serves as cofactor. Mn(2+) is required as a cofactor.

Its subcellular location is the cytoplasm. It carries out the reaction acetate + ATP = acetyl phosphate + ADP. The protein operates within metabolic intermediate biosynthesis; acetyl-CoA biosynthesis; acetyl-CoA from acetate: step 1/2. Catalyzes the formation of acetyl phosphate from acetate and ATP. Can also catalyze the reverse reaction. The chain is Acetate kinase from Acaryochloris marina (strain MBIC 11017).